Reading from the N-terminus, the 131-residue chain is Small ribosomal subunit protein uS8 (131 aa).

Belongs to the universal ribosomal protein uS8 family. As to quaternary structure, part of the 30S ribosomal subunit. Contacts proteins S5 and S12.

Its function is as follows. One of the primary rRNA binding proteins, it binds directly to 16S rRNA central domain where it helps coordinate assembly of the platform of the 30S subunit. The sequence is that of Small ribosomal subunit protein uS8 from Variovorax paradoxus (strain S110).